The sequence spans 599 residues: Endoribonuclease ZC3H12A (599 aa).

A disordered region spans residues 1–40 (MSGPCGEKPVLEASPTMSLWEFEDSHSRQGTPRPGQELAA). Residues 42–87 (EASALELQMKVDFFRKLGYSSTEIHSVLQKLGVQADTNTVLGELVK) form a ubiquitin association domain region. Positions 81–150 (VLGELVKHGT…DGSNVAMSHG (70 aa)) are necessary for interaction with TANK. The segment at 90–133 (TATERERQTSPDPCPQLPLVPRGGGTPKAPNLEPPLPEEEKEGS) is disordered. At Ser-99 the chain carries Phosphoserine. Residues 112–297 (GGGTPKAPNL…LDNFLRKKPL (186 aa)) are RNase. In terms of domain architecture, RNase NYN spans 135–290 (LRPVVIDGSN…LGRHGPSLDN (156 aa)). Positions 214 to 220 (RRVGGKR) are RNA binding. Position 226 (Asp-226) interacts with Mg(2+). A C3H1-type zinc finger spans residues 301 to 324 (HRKQPCPYGRKCTYGIKCRFFHPE). The tract at residues 301-457 (HRKQPCPYGR…SELWGVRGGG (157 aa)) is necessary for interaction with ZC3H12D. Positions 343–420 (LSPPRAPSKD…SGSSFGPTDW (78 aa)) are disordered. Ser-344 is subject to Phosphoserine. The segment covering 358-375 (PSPSSQSSSLLTESEQCS) has biased composition (low complexity). A compositionally biased stretch (polar residues) spans 386–399 (SPGSRQEGLTQTYA). Ser-438 and Ser-442 each carry phosphoserine. A disordered region spans residues 522 to 546 (PPPTSVLQEPPVQSPGAGRSPWGRA).

It belongs to the ZC3H12 family. In terms of assembly, oligomer. Found in a deubiquitination complex with TANK, USP10 and ZC3H12A; this complex inhibits genotoxic stress- or interleukin-1-beta-mediated NF-kappaB activation by promoting IKBKG or TRAF6 deubiquitination. Interacts with IKBKG; this interaction increases in response to DNA damage. Interacts with TANK; this interaction increases in response to DNA damage and serves as a bridge to anchor both TANK and USP10 into a deubiquitinating complex. Interacts with TRAF6; this interaction increases in response to DNA damage and is stimulated by TANK. Interacts with USP10; this interaction increases in response to DNA damage and serves as a bridge to anchor both TANK and USP10 into a deubiquitinating complex. Interacts with ZC3H12D. Interacts with TNRC6A. Interacts with IKBKB/IKKB. Interacts with IKBKB/IKKB. Interacts with BTRC; the interaction occurs when ZC3H12A is phosphorylated in a IKBKB/IKKB-dependent manner. Interacts with IRAK1; this interaction increases the interaction between ZC3H12A and IKBKB/IKKB. Interacts with UPF1; this interaction occurs in a mRNA translationally active- and termination-dependent manner and is essential for ZC3H12A-mediated degradation of target mRNAs. Associates with ribosomes. Interacts with ubiquitin. As to quaternary structure, (Microbial infection) Oligomerization is necessary for antiviral activity. Mg(2+) is required as a cofactor. Post-translationally, phosphorylated by IRAK1; phosphorylation is necessary for subsequent phosphorylation by the I-kappa-B-kinase (IKK) complex. Phosphorylated by I-kappa-B-kinase (IKK) subunits IKBKB/IKKB and CHUK/IKKA at Ser-438 and Ser-442; these phosphorylations promote ubiquitin proteasome-mediated degradation of ZC3H12A and hence facilitates rapid and robust production of IL-6 mRNA in response to toll-like receptor (TLR) or IL-1 receptor stimuli. (Microbial infection) Rapidly degraded in activated T-cells in response to phorbol 13-acetate 12-myristate (PMA) during HIV-1 viral infection. In terms of processing, ubiquitinated; ubiquitination is induced in response to interleukin IL1 receptor stimuli in a IKBKB/IKKB and IRAK1-dependent manner, leading to proteasome-mediated degradation. Post-translationally, proteolytically cleaved between Arg-111 and Arg-214 by MALT1 in activated T-cells; cleavage at Arg-111 is critical for promoting ZC3H12A degradation in response to T-cell receptor (TCR) stimulation, and hence is necessary for prolonging the stability of a set of mRNAs controlling T-cell activation and Th17 cell differentiation. In terms of tissue distribution, expressed in heart, placenta, spleen, kidney, liver and lung. Expressed in leukocytes. Expressed in monocyte.

It localises to the nucleus. It is found in the cytoplasm. The protein resides in the P-body. The protein localises to the rough endoplasmic reticulum membrane. Its subcellular location is the cytoplasmic granule. Functionally, endoribonuclease involved in various biological functions such as cellular inflammatory response and immune homeostasis, glial differentiation of neuroprogenitor cells, cell death of cardiomyocytes, adipogenesis and angiogenesis. Functions as an endoribonuclease involved in mRNA decay. Modulates the inflammatory response by promoting the degradation of a set of translationally active cytokine-induced inflammation-related mRNAs, such as IL6 and IL12B, during the early phase of inflammation. Prevents aberrant T-cell-mediated immune reaction by degradation of multiple mRNAs controlling T-cell activation, such as those encoding cytokines (IL6 and IL2), cell surface receptors (ICOS, TNFRSF4 and TNFR2) and transcription factor (REL). Inhibits cooperatively with ZC3H12A the differentiation of helper T cells Th17 in lungs. They repress target mRNA encoding the Th17 cell-promoting factors IL6, ICOS, REL, IRF4, NFKBID and NFKBIZ. The cooperation requires RNA-binding by RC3H1 and the nuclease activity of ZC3H12A. Together with RC3H1, destabilizes TNFRSF4/OX40 mRNA by binding to the conserved stem loop structure in its 3'UTR. Self regulates by destabilizing its own mRNA. Cleaves mRNA harboring a stem-loop (SL), often located in their 3'-UTRs, during the early phase of inflammation in a helicase UPF1-dependent manner. Plays a role in the inhibition of microRNAs (miRNAs) biogenesis. Cleaves the terminal loop of a set of precursor miRNAs (pre-miRNAs) important for the regulation of the inflammatory response leading to their degradation, and thus preventing the biosynthesis of mature miRNAs. Also plays a role in promoting angiogenesis in response to inflammatory cytokines by inhibiting the production of antiangiogenic microRNAs via its anti-dicer RNase activity. Affects the overall ubiquitination of cellular proteins. Positively regulates deubiquitinase activity promoting the cleavage at 'Lys-48'- and 'Lys-63'-linked polyubiquitin chains on TNF receptor-associated factors (TRAFs), preventing JNK and NF-kappa-B signaling pathway activation, and hence negatively regulating macrophage-mediated inflammatory response and immune homeostasis. Also induces deubiquitination of the transcription factor HIF1A, probably leading to its stabilization and nuclear import, thereby positively regulating the expression of proangiogenic HIF1A-targeted genes. Involved in a TANK-dependent negative feedback response to attenuate NF-kappaB activation through the deubiquitination of IKBKG or TRAF6 in response to interleukin-1-beta (IL1B) stimulation or upon DNA damage. Prevents stress granule (SGs) formation and promotes macrophage apoptosis under stress conditions, including arsenite-induced oxidative stress, heat shock and energy deprivation. Plays a role in the regulation of macrophage polarization; promotes IL4-induced polarization of macrophages M1 into anti-inflammatory M2 state. May also act as a transcription factor that regulates the expression of multiple genes involved in inflammatory response, angiogenesis, adipogenesis and apoptosis. Functions as a positive regulator of glial differentiation of neuroprogenitor cells through an amyloid precursor protein (APP)-dependent signaling pathway. Attenuates septic myocardial contractile dysfunction in response to lipopolysaccharide (LPS) by reducing I-kappa-B-kinase (IKK)-mediated NF-kappa-B activation, and hence myocardial pro-inflammatory cytokine production. (Microbial infection) Binds to Japanese encephalitis virus (JEV) and Dengue virus (DEN) RNAs. In terms of biological role, (Microbial infection) Exhibits antiviral activity against HIV-1 in lymphocytes by decreasing the abundance of HIV-1 viral RNA species. The chain is Endoribonuclease ZC3H12A from Homo sapiens (Human).